Consider the following 144-residue polypeptide: Snaclec 6 (144 aa).

An N-terminal signal peptide occupies residues 1 to 23; the sequence is MGRFISVSFGLLVVFLSLSGTGA. Disulfide bonds link Cys25–Cys36, Cys53–Cys142, and Cys119–Cys134. The region spanning 32–143 is the C-type lectin domain; it reads HEGHCYKVFK…CNFIAPVVCK (112 aa).

The protein belongs to the snaclec family. In terms of assembly, heterodimer; disulfide-linked.

The protein resides in the secreted. Its function is as follows. Interferes with one step of hemostasis (modulation of platelet aggregation, or coagulation cascade, for example). In Daboia siamensis (Eastern Russel's viper), this protein is Snaclec 6.